A 121-amino-acid polypeptide reads, in one-letter code: uncharacterized protein (121 aa).

The protein to M.jannaschii MJ0017 and MJ1466.

This is an uncharacterized protein from Aquifex aeolicus (strain VF5).